The primary structure comprises 177 residues: Large ribosomal subunit protein uL6 (177 aa).

This sequence belongs to the universal ribosomal protein uL6 family. In terms of assembly, part of the 50S ribosomal subunit.

Its function is as follows. This protein binds to the 23S rRNA, and is important in its secondary structure. It is located near the subunit interface in the base of the L7/L12 stalk, and near the tRNA binding site of the peptidyltransferase center. In Methanocella arvoryzae (strain DSM 22066 / NBRC 105507 / MRE50), this protein is Large ribosomal subunit protein uL6.